Here is a 1079-residue protein sequence, read N- to C-terminus: DNA ligase 4 (1079 aa).

The disordered stretch occupies residues 1–20; the sequence is MAVHAPYNHAPPPTQEINGQ. Residues E295, K297, L298, R302, E357, F395, E460, K465, K482, and K484 each contribute to the ATP site. K297 serves as the catalytic N6-AMP-lysine intermediate. A Mg(2+)-binding site is contributed by E357. E460 is a binding site for Mg(2+). Residues 699–789 form the BRCT 1 domain; the sequence is VETSIFSDMT…TALPFLKEFL (91 aa). Positions 838-847 are enriched in acidic residues; it reads DGEDKDEIDV. The segment at 838-942 is disordered; that stretch reads DGEDKDEIDV…SDVGVNGDDY (105 aa). Basic and acidic residues-rich tracts occupy residues 848 to 878 and 900 to 914; these read EESR…KKLQ and MSLK…ERSR. The BRCT 2 domain maps to 968 to 1078; sequence DEDRIFYHLA…TLLDEDLYKP (111 aa).

The protein belongs to the ATP-dependent DNA ligase family. The cofactor is Mg(2+).

It localises to the nucleus. It carries out the reaction ATP + (deoxyribonucleotide)n-3'-hydroxyl + 5'-phospho-(deoxyribonucleotide)m = (deoxyribonucleotide)n+m + AMP + diphosphate.. Functionally, DNA ligase involved in DNA non-homologous end joining (NHEJ); required for double-strand break (DSB) repair. The sequence is that of DNA ligase 4 (LIG4) from Cryptococcus neoformans var. neoformans serotype D (strain JEC21 / ATCC MYA-565) (Filobasidiella neoformans).